The following is a 537-amino-acid chain: GTPase LSG1-1 (537 aa).

The 205-residue stretch at 158-362 (WRQLWRVLER…LCDCPGLVFP (205 aa)) folds into the CP-type G domain. Positions 176-180 (DARDP) match the DARXP motif motif. Positions 206–209 (NKAD) are G4. 206–209 (NKAD) lines the GTP pocket. Positions 234–236 (SAK) are G5. The G1 stretch occupies residues 311–318 (GYPNVGKS). 314-319 (NVGKSS) provides a ligand contact to GTP. The tract at residues 337–341 (GKTKH) is G2. A G3 region spans residues 355–358 (DCPG). Residue G358 participates in GTP binding. The tract at residues 484 to 508 (LGAETREGSQTEKKGEEAPSLGLDQ) is disordered. Positions 487-500 (ETREGSQTEKKGEE) are enriched in basic and acidic residues.

The protein belongs to the TRAFAC class YlqF/YawG GTPase family. As to expression, ubiquitous, with the highest expression in stem and hypsophyll on day 66.

Its subcellular location is the cytoplasm. In terms of biological role, GTPase that might be redundant with LSG1-2 for ribosome biogenesis. Binds to 23S rRNA. The protein is GTPase LSG1-1 of Arabidopsis thaliana (Mouse-ear cress).